A 175-amino-acid polypeptide reads, in one-letter code: Small ribosomal subunit protein uS5 (175 aa).

An S5 DRBM domain is found at leucine 11–valine 74.

This sequence belongs to the universal ribosomal protein uS5 family. In terms of assembly, part of the 30S ribosomal subunit. Contacts proteins S4 and S8.

Its function is as follows. With S4 and S12 plays an important role in translational accuracy. In terms of biological role, located at the back of the 30S subunit body where it stabilizes the conformation of the head with respect to the body. The chain is Small ribosomal subunit protein uS5 from Rickettsia typhi (strain ATCC VR-144 / Wilmington).